We begin with the raw amino-acid sequence, 130 residues long: Small ribosomal subunit protein uS11c (130 aa).

It belongs to the universal ribosomal protein uS11 family. As to quaternary structure, part of the 30S ribosomal subunit.

It localises to the plastid. The protein resides in the chloroplast. This chain is Small ribosomal subunit protein uS11c, found in Drimys granadensis.